The following is a 638-amino-acid chain: Chaperone protein DnaK (638 aa).

Position 199 is a phosphothreonine; by autocatalysis (Thr199). A compositionally biased stretch (low complexity) spans 603 to 618 (YAQPGAEAGAEQQGSA). The disordered stretch occupies residues 603-638 (YAQPGAEAGAEQQGSANNADDDIVDAEFEEVNDDKK). Acidic residues predominate over residues 621 to 638 (ADDDIVDAEFEEVNDDKK).

Belongs to the heat shock protein 70 family.

Functionally, acts as a chaperone. This Hydrogenovibrio crunogenus (strain DSM 25203 / XCL-2) (Thiomicrospira crunogena) protein is Chaperone protein DnaK.